A 403-amino-acid chain; its full sequence is MFVASERKMRAHQVLTFLLLFVITSVASENASTSRGCGLDLLPQYVSLCDLDAIWGIVVEAVAGAGALITLLLMLILLVRLPFIKEKEKKSPVGLHFLFLLGTLGLFGLTFAFIIQEDETICSVRRFLWGVLFALCFSCLLSQAWRVRRLVRHGTGPAGWQLVGLALCLMLVQVIIAVEWLVLTVLRDTRPACAYEPMDFVMALIYDMVLLVVTLGLALFTLCGKFKRWKLNGAFLLITAFLSVLIWVAWMTMYLFGNVKLQQGDAWNDPTLAITLAASGWVFVIFHAIPEIHCTLLPALQENTPNYFDTSQPRMRETAFEEDVQLPRAYMENKAFSMDEHNAALRTAGFPNGSLGKRPSGSLGKRPSAPFRSNVYQPTEMAVVLNGGTIPTAPPSHTGRHLW.

Residues 1-28 form the signal peptide; it reads MFVASERKMRAHQVLTFLLLFVITSVAS. Topologically, residues 29–56 are extracellular; it reads ENASTSRGCGLDLLPQYVSLCDLDAIWG. N-linked (GlcNAc...) asparagine glycosylation is present at Asn30. Residues 57–77 form a helical membrane-spanning segment; it reads IVVEAVAGAGALITLLLMLIL. Residues 78–94 are Cytoplasmic-facing; the sequence is LVRLPFIKEKEKKSPVG. The helical transmembrane segment at 95–115 threads the bilayer; sequence LHFLFLLGTLGLFGLTFAFII. Topologically, residues 116 to 126 are extracellular; the sequence is QEDETICSVRR. A helical transmembrane segment spans residues 127–147; that stretch reads FLWGVLFALCFSCLLSQAWRV. The Cytoplasmic portion of the chain corresponds to 148-162; the sequence is RRLVRHGTGPAGWQL. A helical membrane pass occupies residues 163 to 183; the sequence is VGLALCLMLVQVIIAVEWLVL. At 184–199 the chain is on the extracellular side; that stretch reads TVLRDTRPACAYEPMD. Residues 200 to 220 traverse the membrane as a helical segment; it reads FVMALIYDMVLLVVTLGLALF. Residues 221–234 lie on the Cytoplasmic side of the membrane; that stretch reads TLCGKFKRWKLNGA. The chain crosses the membrane as a helical span at residues 235 to 255; it reads FLLITAFLSVLIWVAWMTMYL. Residues 256–271 are Extracellular-facing; sequence FGNVKLQQGDAWNDPT. A helical membrane pass occupies residues 272-292; it reads LAITLAASGWVFVIFHAIPEI. At 293–403 the chain is on the cytoplasmic side; the sequence is HCTLLPALQE…PPSHTGRHLW (111 aa). Residues 349–371 form a disordered region; it reads GFPNGSLGKRPSGSLGKRPSAPF. Phosphoserine is present on Ser354.

Belongs to the G-protein coupled receptor 3 family. As to expression, expression is high in kidney, pancreas, and testis, medium in brain, heart, prostate, small intestine, and spleen, low in liver, placenta, skeletal muscle, colon, ovary, and thymus, and not detectable in lung and peripheral leukocyte. According to PubMed:10945465, highly expressed in most brain areas examined, with the highest levels observed in corpus callosum, caudate nucleus, putamen, substantia nigra, thalamus, hippocampus, and spinal cord as well as in dorsal root ganglia (DRG). Expressed in glia limitans, ependymal cells, astrocyte cell bodies, the perivascular region in astrocyte endfeet, but not in neurons. In the periphery, expression levels are relatively low, compared to the CNS, with the strongest expression detected in pancreas, testis, uterus, and stomach.

It is found in the cell membrane. It localises to the cytoplasmic vesicle membrane. In terms of biological role, G-protein coupled receptor involved in the regulation of cell volume. In Homo sapiens (Human), this protein is G-protein coupled receptor family C group 5 member B (GPRC5B).